The sequence spans 445 residues: Gamma-glutamyl phosphate reductase (445 aa).

This sequence belongs to the gamma-glutamyl phosphate reductase family.

Its subcellular location is the cytoplasm. It carries out the reaction L-glutamate 5-semialdehyde + phosphate + NADP(+) = L-glutamyl 5-phosphate + NADPH + H(+). Its pathway is amino-acid biosynthesis; L-proline biosynthesis; L-glutamate 5-semialdehyde from L-glutamate: step 2/2. Its function is as follows. Catalyzes the NADPH-dependent reduction of L-glutamate 5-phosphate into L-glutamate 5-semialdehyde and phosphate. The product spontaneously undergoes cyclization to form 1-pyrroline-5-carboxylate. The sequence is that of Gamma-glutamyl phosphate reductase from Synechococcus sp. (strain RCC307).